The chain runs to 160 residues: Large ribosomal subunit protein uL15 (160 aa).

The segment covering 1 to 13 has biased composition (basic and acidic residues); sequence MKLNELRDNEGAA. Residues 1–51 form a disordered region; it reads MKLNELRDNEGAARKKKRVARGPGSGKGKTAGRGIKGQKSRSGVALNGYEG. A compositionally biased stretch (gly residues) spans 23–35; that stretch reads PGSGKGKTAGRGI.

Belongs to the universal ribosomal protein uL15 family. Part of the 50S ribosomal subunit.

In terms of biological role, binds to the 23S rRNA. The sequence is that of Large ribosomal subunit protein uL15 from Cereibacter sphaeroides (strain ATCC 17025 / ATH 2.4.3) (Rhodobacter sphaeroides).